Here is a 480-residue protein sequence, read N- to C-terminus: Beta-glucosidase A (480 aa).

The active-site Proton donor is the Glu-177. Glu-378 functions as the Nucleophile in the catalytic mechanism.

This sequence belongs to the glycosyl hydrolase 1 family.

It carries out the reaction Hydrolysis of terminal, non-reducing beta-D-glucosyl residues with release of beta-D-glucose.. This Enterobacter agglomerans (Erwinia herbicola) protein is Beta-glucosidase A (bglA).